Here is a 46-residue protein sequence, read N- to C-terminus: Endochitinase 2 (46 aa).

Belongs to the glycosyl hydrolase 19 family. Chitinase class I subfamily.

It catalyses the reaction Random endo-hydrolysis of N-acetyl-beta-D-glucosaminide (1-&gt;4)-beta-linkages in chitin and chitodextrins.. Defense against chitin-containing fungal and bacterial pathogens. The sequence is that of Endochitinase 2 from Arachis hypogaea (Peanut).